A 216-amino-acid polypeptide reads, in one-letter code: Uracil phosphoribosyltransferase (216 aa).

Position 30-34 (30-34 (KNLVR)) interacts with GTP. 5-phospho-alpha-D-ribose 1-diphosphate-binding positions include arginine 80, arginine 105, and 140-148 (DPMIATAST). Uracil contacts are provided by residues isoleucine 203 and 208–210 (GDA). Aspartate 209 is a 5-phospho-alpha-D-ribose 1-diphosphate binding site.

This sequence belongs to the UPRTase family. It depends on Mg(2+) as a cofactor.

It carries out the reaction UMP + diphosphate = 5-phospho-alpha-D-ribose 1-diphosphate + uracil. It functions in the pathway pyrimidine metabolism; UMP biosynthesis via salvage pathway; UMP from uracil: step 1/1. Allosterically activated by GTP. In terms of biological role, catalyzes the conversion of uracil and 5-phospho-alpha-D-ribose 1-diphosphate (PRPP) to UMP and diphosphate. This is Uracil phosphoribosyltransferase from Saccharolobus islandicus (strain M.16.4 / Kamchatka #3) (Sulfolobus islandicus).